Consider the following 466-residue polypeptide: Argininosuccinate lyase 1 (466 aa).

Belongs to the lyase 1 family. Argininosuccinate lyase subfamily.

It is found in the cytoplasm. It catalyses the reaction 2-(N(omega)-L-arginino)succinate = fumarate + L-arginine. It functions in the pathway amino-acid biosynthesis; L-arginine biosynthesis; L-arginine from L-ornithine and carbamoyl phosphate: step 3/3. The protein is Argininosuccinate lyase 1 of Agrobacterium fabrum (strain C58 / ATCC 33970) (Agrobacterium tumefaciens (strain C58)).